A 386-amino-acid chain; its full sequence is Putative F-box/kelch-repeat protein At3g17280 (386 aa).

The region spanning 1–48 (MTTISDLPYDLLPEILSRLPTKSIPKLKTTCKKWYALFKDPKFVEKKL) is the F-box domain. Kelch repeat units follow at residues 155–203 (SYKI…LKES) and 340–386 (RIYI…IVEV).

The sequence is that of Putative F-box/kelch-repeat protein At3g17280 from Arabidopsis thaliana (Mouse-ear cress).